The sequence spans 397 residues: Dual specificity mitogen-activated protein kinase kinase 4 (397 aa).

The disordered stretch occupies residues 1–38 (MAAPSPSGGGGSGGGGGTPGPIGPPASGHPAVSSMQGK). At A2 the chain carries N-acetylalanine. Residues 7 to 20 (SGGGGSGGGGGTPG) are compositionally biased toward gly residues. The segment at 35 to 50 (MQGKRKALKLNFANPP) is d domain. Residue R56 is modified to Asymmetric dimethylarginine; alternate. Position 56 is an omega-N-methylarginine; alternate (R56). A Phosphoserine modification is found at S88. One can recognise a Protein kinase domain in the interval 100-366 (LKDLGEIGRG…KELLKHPFIL (267 aa)). Residues 106-114 (IGRGAYGSV) and K129 contribute to the ATP site. D227 (proton acceptor) is an active-site residue. The residue at position 255 (S255) is a Phosphoserine. T259 bears the Phosphothreonine mark. The segment at 362–385 (HPFILMYEERTVEVACYVCKILDQ) is DVD domain.

This sequence belongs to the protein kinase superfamily. STE Ser/Thr protein kinase family. MAP kinase kinase subfamily. In terms of assembly, interacts with SPAG9. Interacts (via its D domain) with its substrates MAPK8/JNK1, MAPK9/JNK2, MAPK10/JNK3, MAPK11 and MAPK14. Interacts (via its DVD domain) with MAP3Ks activators like MAP3K1/MEKK1 and MAP3K11/MLK3. Interacts with ARRB1, ARRB2 and MAPK8IP3/JIP3. Activated by phosphorylation on Ser-255 and Thr-259 by MAP kinase kinase kinases (MAP3Ks). As to expression, strong expression is detected in most of the central nervous system and in liver and thymus during early stages of development. While expression in nervous system increases over time, expression in fetal liver and thymus gradually decreases as embryogenesis proceeds. High level of expression in the central nervous system persists throughout postnatal development and remained at a stable level in adult brain.

Its subcellular location is the cytoplasm. It localises to the nucleus. It carries out the reaction L-seryl-[protein] + ATP = O-phospho-L-seryl-[protein] + ADP + H(+). It catalyses the reaction L-threonyl-[protein] + ATP = O-phospho-L-threonyl-[protein] + ADP + H(+). The catalysed reaction is L-tyrosyl-[protein] + ATP = O-phospho-L-tyrosyl-[protein] + ADP + H(+). Activated in response to a variety of cellular stresses, including UV and gamma-irradiation, heat shock, hyperosmolarity, T-cell receptor stimulation, peroxide and inflammatory cytokines. Also activated by developmental cues. MAP2K4/MKK4 is activated by the majority of MKKKs, such as MAP3K5/ASK1, MAP3K1/MEKK1, MAP3K7/TAK1, MAP3K10/MLK2, MAP3K11/MLK3, MAP3K12/DLK and MAP3K13/LZK. Dual specificity protein kinase which acts as an essential component of the MAP kinase signal transduction pathway. Essential component of the stress-activated protein kinase/c-Jun N-terminal kinase (SAP/JNK) signaling pathway. With MAP2K7/MKK7, is the one of the only known kinase to directly activate the stress-activated protein kinase/c-Jun N-terminal kinases MAPK8/JNK1, MAPK9/JNK2 and MAPK10/JNK3. MAP2K4/MKK4 and MAP2K7/MKK7 both activate the JNKs by phosphorylation, but they differ in their preference for the phosphorylation site in the Thr-Pro-Tyr motif. MAP2K4 shows preference for phosphorylation of the Tyr residue and MAP2K7/MKK7 for the Thr residue. The phosphorylation of the Thr residue by MAP2K7/MKK7 seems to be the prerequisite for JNK activation at least in response to pro-inflammatory cytokines, while other stimuli activate both MAP2K4/MKK4 and MAP2K7/MKK7 which synergistically phosphorylate JNKs. MAP2K4 is required for maintaining peripheral lymphoid homeostasis. The MKK/JNK signaling pathway is also involved in mitochondrial death signaling pathway, including the release cytochrome c, leading to apoptosis. Whereas MAP2K7/MKK7 exclusively activates JNKs, MAP2K4/MKK4 additionally activates the p38 MAPKs MAPK11, MAPK12, MAPK13 and MAPK14. This is Dual specificity mitogen-activated protein kinase kinase 4 (Map2k4) from Mus musculus (Mouse).